The sequence spans 869 residues: Aconitate hydratase A (869 aa).

Residues Cys-411, Cys-477, and Cys-480 each contribute to the [4Fe-4S] cluster site.

Belongs to the aconitase/IPM isomerase family. As to quaternary structure, monomer. [4Fe-4S] cluster is required as a cofactor.

It carries out the reaction citrate = D-threo-isocitrate. The catalysed reaction is (2S,3R)-3-hydroxybutane-1,2,3-tricarboxylate = 2-methyl-cis-aconitate + H2O. It functions in the pathway carbohydrate metabolism; tricarboxylic acid cycle; isocitrate from oxaloacetate: step 2/2. The protein operates within organic acid metabolism; propanoate degradation. Involved in the catabolism of short chain fatty acids (SCFA) via the tricarboxylic acid (TCA)(acetyl degradation route) and the 2-methylcitrate cycle I (propionate degradation route). Catalyzes the reversible isomerization of citrate to isocitrate via cis-aconitate. Could catalyze the hydration of 2-methyl-cis-aconitate to yield (2S,3R)-2-methylisocitrate. The apo form of AcnA functions as a RNA-binding regulatory protein. In Cupriavidus necator (Alcaligenes eutrophus), this protein is Aconitate hydratase A.